A 185-amino-acid chain; its full sequence is Photosystem I assembly protein Ycf4 (185 aa).

2 helical membrane passes run 22–42 and 57–77; these read FFFASILFGGALGFFLVGFSS and IIFVPQGIVMCFYGIAGLFFS.

This sequence belongs to the Ycf4 family.

The protein resides in the plastid. It is found in the chloroplast thylakoid membrane. In terms of biological role, seems to be required for the assembly of the photosystem I complex. This Welwitschia mirabilis (Tree tumbo) protein is Photosystem I assembly protein Ycf4.